The following is a 165-amino-acid chain: Phosphopantetheine adenylyltransferase (165 aa).

Substrate is bound at residue S9. ATP is bound by residues 9-10 (SF) and H17. Positions 41, 75, and 89 each coordinate substrate. ATP-binding positions include 90–92 (GVR), E100, and 125–131 (YLFVRSD).

The protein belongs to the bacterial CoaD family. Homohexamer. The cofactor is Mg(2+).

Its subcellular location is the cytoplasm. The enzyme catalyses (R)-4'-phosphopantetheine + ATP + H(+) = 3'-dephospho-CoA + diphosphate. The protein operates within cofactor biosynthesis; coenzyme A biosynthesis; CoA from (R)-pantothenate: step 4/5. In terms of biological role, reversibly transfers an adenylyl group from ATP to 4'-phosphopantetheine, yielding dephospho-CoA (dPCoA) and pyrophosphate. The sequence is that of Phosphopantetheine adenylyltransferase from Borrelia turicatae (strain 91E135).